We begin with the raw amino-acid sequence, 655 residues long: MFFSLLLVLGLTEAEKIKICLQKQVNSSFSLHNGFGGNLYATEEKRMFELVKPKAGASVLNQSTWIGFGDSRTDKSNSAFPRSADVSAKTADKFRFLSGGSLMLSMFGPPGKVDYLYQGCGKHKVFYEGVNWSPHAAINCYRKNWTDIKLNFQKNIYELASQSHCMSLVNALDKTIPLQVTAGTAGNCNNSFLKNPALYTQEVKPSENKCGKENLAFFTLPTQFGTYECKLHLVASCYFIYDSKEVYNKRGCDNYFQVIYDSFGKVVGGLDNRVSPYTGNSGDTPTMQCDMLQLKPGRYSVRSSPRFLLMPERSYCFDMKEKGPVTAVQSIWGKGRESDYAVDQACLSTPGCMLIQKQKPYIGEADDHHGDQEMRELLSGLDYEARCISQSGWVNETSPFTEKYLLPPKFGRCPLAAKEESIPKIPDGLLIPTSGTDTTVTKPKSRIFGIDDLIIGVLFVAIVETGIGGYLLGSRKESGGGVTKESAEKGFEKIGNDIQILKSSINIAIEKLNDRISHDEQAIRDLTLEIENARSEALLGELGIIRALLVGNISIGLQESLWELASEITNRAGDLAVEVSPGCWIIDNNICDQSCQNFIFKFNETAPVPTIPPLDTKIDLQSDPFYWGSSLGLAITATISLAALVISGIAICRTK.

The N-terminal stretch at methionine 1–alanine 14 is a signal peptide. A fusion domain-1 region spans residues glutamate 15–tyrosine 40. Residues glutamate 15–serine 630 are Extracellular-facing. Disulfide bonds link cysteine 20–cysteine 583, cysteine 120–cysteine 165, cysteine 140–cysteine 188, cysteine 210–cysteine 252, cysteine 229–cysteine 316, cysteine 237–cysteine 289, and cysteine 346–cysteine 352. Residues asparagine 26 and asparagine 61 are each glycosylated (N-linked (GlcNAc...) asparagine; by host). Esterase domain-1 regions lie at residues alanine 41–asparagine 151 and alanine 41–glutamate 158. The active-site Nucleophile is serine 71. 2 N-linked (GlcNAc...) asparagine; by host glycosylation sites follow: asparagine 144 and asparagine 189. 2 N-acetyl-9-O-acetylneuraminic acid binding regions span residues asparagine 151–methionine 310 and glutamate 158–methionine 310. Esterase domain-2 regions lie at residues methionine 310–glutamate 364 and proline 311–alanine 365. Fusion domain-2 regions lie at residues alanine 365–alanine 650 and aspartate 366–isoleucine 651. Catalysis depends on charge relay system residues aspartate 366 and histidine 369. 3 N-linked (GlcNAc...) asparagine; by host glycosylation sites follow: asparagine 395, asparagine 552, and asparagine 603. The helical transmembrane segment at leucine 631–isoleucine 651 threads the bilayer. Residues cysteine 652–lysine 655 are Cytoplasmic-facing.

It belongs to the influenza viruses hemagglutinin family. Homotrimer of disulfide-linked HEF1-HEF2. Post-translationally, in natural infection, inactive HEF is matured into HEF1 and HEF2 outside the cell by one or more trypsin-like, arginine-specific endoprotease.

Its subcellular location is the virion membrane. It localises to the host cell membrane. It catalyses the reaction N-acetyl-9-O-acetylneuraminate + H2O = N-acetylneuraminate + acetate + H(+). It carries out the reaction N-acetyl-4-O-acetylneuraminate + H2O = N-acetylneuraminate + acetate + H(+). Its function is as follows. Binds to the N-acetyl-9-O-acetylneuraminic acid residues on the cell surface, bringing about the attachment of the virus particle to the cell. Plays a major role in the determination of host range restriction and virulence. Class I viral fusion protein. Responsible for penetration of the virus into the cell cytoplasm by mediating the fusion of the membrane of the endocytosed virus particle with the endosomal membrane. Low pH in endosomes induce an irreversible conformational change in HEF2, releasing the fusion hydrophobic peptide. Several trimers are required to form a competent fusion pore. Displays a receptor-destroying activity which is a neuraminidate-O-acetyl esterase. This activity cleaves off any receptor on the cell surface, which would otherwise prevent virions release. These cleavages prevent self-aggregation and ensure the efficient spread of the progeny virus from cell to cell. In Homo sapiens (Human), this protein is Hemagglutinin-esterase-fusion glycoprotein.